Reading from the N-terminus, the 711-residue chain is MNHDYHRLAERRHHAPHDVLGAHENGDGTTTIRTVQCGAESVAVRINGGEPVQMVPAEEYPALFTATVDYFVDTYNFEVTWAGGTAATLEDPYRRLPTVGDLDRYLIGEGRHEELWKVLGAHVVDGGVAFSVWAPHAAGVSVIGDFNGWNANQHPLRALGSSGIWELWIPSVSAGAHYKFSITTGDGVRLDKADPMARLAEPAPATASIVVADSDYAWGDDEWLAHRAAVGVDETMSIYEMHLGSWRKGRSYRELAVELVEYVQELGYTHVELMGVSEHPFEPSWGYQVTSYYAPNNRYGGPDDLRYLIDSLHRAGIGVIMDWVPGHFPKDGWALGRFDGEACYEHPDPRRGEQPDWGTYVFDFGRNEVRNFLVANALYWCKEFHIDGLRVDAVASMLYLDYSRDDWLPNQYGGRENLDAVEFLKEMNATVHRECPGSLTIAEESTSWPGVTAPTSEGGLGFSLKWNMGWMHDSLEYIQRDPAYRSYHHNEITFSMVYAYSENYVLPISHDEVVHGKGTLWSRMPAGSAWDKAAMVRSYLAFMWAHPGKKLLFQGQEWGQTEEWNESRGLDWHDLEGWEGEFHRGISALTSQLNKLYHSELALGQDHAPEGFQWIASDDSTNNVLSFIRRHRGRELACVINFSGTTQENYRIGLPQAGTWREVLNTDDVQYEGAGRVNGDLHTEPTGSHGMEASAVLQIPAHTARWFVLES.

The active-site Nucleophile is the Asp-392. Glu-443 serves as the catalytic Proton donor.

This sequence belongs to the glycosyl hydrolase 13 family. GlgB subfamily. Monomer.

The catalysed reaction is Transfers a segment of a (1-&gt;4)-alpha-D-glucan chain to a primary hydroxy group in a similar glucan chain.. It functions in the pathway glycan biosynthesis; glycogen biosynthesis. Functionally, catalyzes the formation of the alpha-1,6-glucosidic linkages in glycogen by scission of a 1,4-alpha-linked oligosaccharide from growing alpha-1,4-glucan chains and the subsequent attachment of the oligosaccharide to the alpha-1,6 position. The sequence is that of 1,4-alpha-glucan branching enzyme GlgB from Corynebacterium jeikeium (strain K411).